Consider the following 714-residue polypeptide: ATP-dependent zinc metalloprotease FtsH (714 aa).

The Cytoplasmic portion of the chain corresponds to M1–Q75. The chain crosses the membrane as a helical span at residues F76–V96. Residues S97–L188 are Periplasmic-facing. Residues S189 to I209 form a helical membrane-spanning segment. The Cytoplasmic segment spans residues K210–T714. G280 to T287 provides a ligand contact to ATP. H502 is a Zn(2+) binding site. The active site involves E503. 2 residues coordinate Zn(2+): H506 and D579. The interval P688–T714 is disordered. The segment covering E699–T714 has biased composition (polar residues).

This sequence in the central section; belongs to the AAA ATPase family. It in the C-terminal section; belongs to the peptidase M41 family. As to quaternary structure, homohexamer. It depends on Zn(2+) as a cofactor.

The protein localises to the cell inner membrane. Acts as a processive, ATP-dependent zinc metallopeptidase for both cytoplasmic and membrane proteins. Plays a role in the quality control of integral membrane proteins. The protein is ATP-dependent zinc metalloprotease FtsH of Ralstonia pickettii (strain 12J).